We begin with the raw amino-acid sequence, 378 residues long: Erythronate-4-phosphate dehydrogenase (378 aa).

Residues Ser-45 and Thr-66 each coordinate substrate. 2 residues coordinate NAD(+): Asp-146 and Thr-175. The active site involves Arg-208. An NAD(+)-binding site is contributed by Asp-232. Glu-237 is a catalytic residue. Residue His-254 is the Proton donor of the active site. Gly-257 is an NAD(+) binding site. Tyr-258 provides a ligand contact to substrate.

It belongs to the D-isomer specific 2-hydroxyacid dehydrogenase family. PdxB subfamily. In terms of assembly, homodimer.

It is found in the cytoplasm. The catalysed reaction is 4-phospho-D-erythronate + NAD(+) = (R)-3-hydroxy-2-oxo-4-phosphooxybutanoate + NADH + H(+). It participates in cofactor biosynthesis; pyridoxine 5'-phosphate biosynthesis; pyridoxine 5'-phosphate from D-erythrose 4-phosphate: step 2/5. In terms of biological role, catalyzes the oxidation of erythronate-4-phosphate to 3-hydroxy-2-oxo-4-phosphonooxybutanoate. In Escherichia coli (strain 55989 / EAEC), this protein is Erythronate-4-phosphate dehydrogenase.